We begin with the raw amino-acid sequence, 425 residues long: MAEIMHVFAREIMDSRGNPTVEAEVFLDDGSHGVAGVPSGASTGVHEAHELRDGGDRYLGKGVLKAVENVNEEIGDELAGLEADDQRLIDAAMIKLDGTENKSRLGANAILGVSMAVAKAAADSAGLPLFRYIGGPNAHVLPVPMMNIINGGAHADSGVDVQEFMIAPIGFDSFSEALRAGAEVYHALKKVINEKGLSTGLGDEGGFAPSVESTRAALDLIVEAIKKAGFEPGKDIALALDVASSEFFKDGKYHFEGGEHTAEEMANVYAELVDEYPIVSIEDPLQEDDWDGYVALTAQIGDKVQIVGDDFFVTNPARLKEGIAKKAANSILVKVNQIGTLTETFDAVDMAHRAGYTSMMSHRSGETEDTTIADLAVALNCGQIKTGAPARSDRVAKYNQLLRIEQLLGDAAVYAGRSAFPRFQG.

(2R)-2-phosphoglycerate is bound at residue glutamine 162. Glutamate 204 functions as the Proton donor in the catalytic mechanism. Positions 241, 282, and 309 each coordinate Mg(2+). Lysine 334, arginine 363, serine 364, and lysine 385 together coordinate (2R)-2-phosphoglycerate. Catalysis depends on lysine 334, which acts as the Proton acceptor.

The protein belongs to the enolase family. Mg(2+) is required as a cofactor.

It localises to the cytoplasm. It is found in the secreted. The protein resides in the cell surface. It catalyses the reaction (2R)-2-phosphoglycerate = phosphoenolpyruvate + H2O. The protein operates within carbohydrate degradation; glycolysis; pyruvate from D-glyceraldehyde 3-phosphate: step 4/5. In terms of biological role, catalyzes the reversible conversion of 2-phosphoglycerate (2-PG) into phosphoenolpyruvate (PEP). It is essential for the degradation of carbohydrates via glycolysis. This chain is Enolase, found in Corynebacterium efficiens (strain DSM 44549 / YS-314 / AJ 12310 / JCM 11189 / NBRC 100395).